A 358-amino-acid polypeptide reads, in one-letter code: MREYKIAAIPADGIGPEVIAAGLQVLEALEQRSGDFKIHTETFDWGSDYYKKHGVMMPADGLDKLKKFDAIFFGAVGAPDVPDHITLWGLRLPICQGFDQYANVRPTKILPGITPPLRNCGPGDLDWVIVRENSEGEYSGHGGRAHRGLPEEVGTEVAIFTRVGVTRIMRYAFKLAQARPRKLLTVVTKSNAQRHGMVMWDEIAAEVATEFPDVTWDKMLVDAMTVRMTLKPETLDTIVATNLHADILSDLAGALAGSLGVAPTANIDPERRFPSMFEPIHGSAFDITGKGIANPIATFWTAAQMLEHLGERDAAARLMGAVERVTEAGILTPDVGGTANTSQVTEAVCNAIAGSNII.

Positions 222, 246, and 250 each coordinate Mn(2+).

The protein belongs to the isocitrate and isopropylmalate dehydrogenases family. Mg(2+) is required as a cofactor. Mn(2+) serves as cofactor. It depends on K(+) as a cofactor.

It is found in the cytoplasm. It catalyses the reaction tartrate + NAD(+) = 2-hydroxy-3-oxosuccinate + NADH + H(+). It carries out the reaction (2R,3S)-tartrate + NAD(+) = 2-hydroxy-3-oxosuccinate + NADH + H(+). The catalysed reaction is (2R,3R)-tartrate + NAD(+) = 2-hydroxy-3-oxosuccinate + NADH + H(+). The enzyme catalyses (2R,3R)-tartrate + H(+) = (R)-glycerate + CO2. It catalyses the reaction (R)-malate + NAD(+) = pyruvate + CO2 + NADH. The protein operates within carbohydrate acid metabolism; tartrate degradation; 2-hydroxy-3-oxosuccinate from L-tartrate: step 1/1. It functions in the pathway carbohydrate acid metabolism; tartrate degradation; 2-hydroxy-3-oxosuccinate from meso-tartrate: step 1/1. Its pathway is carbohydrate acid metabolism; tartrate degradation; D-glycerate from L-tartrate: step 1/1. Has multiple catalytic activities. Apart from catalyzing the oxidation of (+)-tartrate to oxaloglycolate, also converts meso-tartrate to D-glycerate and catalyzes the oxidative decarboxylation of D-malate to pyruvate. The polypeptide is Probable tartrate dehydrogenase/decarboxylase TtuC' (ttuC') (Agrobacterium vitis (Rhizobium vitis)).